Here is a 427-residue protein sequence, read N- to C-terminus: Phosphoribosylamine--glycine ligase (427 aa).

The ATP-grasp domain occupies 110 to 315; it reads KDFCQRHGLP…IVPILLAAAK (206 aa). 136 to 196 lines the ATP pocket; the sequence is LDTLEAPFVI…EEFMHGEEAS (61 aa). Mg(2+) contacts are provided by Glu285 and Asn287.

The protein belongs to the GARS family. Mg(2+) is required as a cofactor. Mn(2+) serves as cofactor.

It catalyses the reaction 5-phospho-beta-D-ribosylamine + glycine + ATP = N(1)-(5-phospho-beta-D-ribosyl)glycinamide + ADP + phosphate + H(+). It participates in purine metabolism; IMP biosynthesis via de novo pathway; N(1)-(5-phospho-D-ribosyl)glycinamide from 5-phospho-alpha-D-ribose 1-diphosphate: step 2/2. This Caulobacter vibrioides (strain ATCC 19089 / CIP 103742 / CB 15) (Caulobacter crescentus) protein is Phosphoribosylamine--glycine ligase.